We begin with the raw amino-acid sequence, 338 residues long: Phenylalanine--tRNA ligase alpha subunit (338 aa).

Glutamate 252 is a binding site for Mg(2+).

This sequence belongs to the class-II aminoacyl-tRNA synthetase family. Phe-tRNA synthetase alpha subunit type 1 subfamily. In terms of assembly, tetramer of two alpha and two beta subunits. It depends on Mg(2+) as a cofactor.

The protein resides in the cytoplasm. The catalysed reaction is tRNA(Phe) + L-phenylalanine + ATP = L-phenylalanyl-tRNA(Phe) + AMP + diphosphate + H(+). This chain is Phenylalanine--tRNA ligase alpha subunit, found in Mycoplasmoides gallisepticum (strain R(low / passage 15 / clone 2)) (Mycoplasma gallisepticum).